The following is a 178-amino-acid chain: Large ribosomal subunit protein uL5 (178 aa).

Belongs to the universal ribosomal protein uL5 family. In terms of assembly, part of the 50S ribosomal subunit; part of the 5S rRNA/L5/L18/L25 subcomplex. Contacts the 5S rRNA and the P site tRNA. Forms a bridge to the 30S subunit in the 70S ribosome.

In terms of biological role, this is one of the proteins that bind and probably mediate the attachment of the 5S RNA into the large ribosomal subunit, where it forms part of the central protuberance. In the 70S ribosome it contacts protein S13 of the 30S subunit (bridge B1b), connecting the 2 subunits; this bridge is implicated in subunit movement. Contacts the P site tRNA; the 5S rRNA and some of its associated proteins might help stabilize positioning of ribosome-bound tRNAs. The chain is Large ribosomal subunit protein uL5 from Psychrobacter arcticus (strain DSM 17307 / VKM B-2377 / 273-4).